The chain runs to 370 residues: Protein SUPPRESSOR OF NIM1 1 (370 aa).

An F-box domain is found at 1–43; it reads MALPWELEEDILSRLPPISLVRFRTVSKHWNSLFNDKTFINNH.

In terms of tissue distribution, ubiquitous, at low levels.

Functionally, negatively regulates a plant defense signaling pathway which is independent of salicylic acid (SA) and systemic acquired resistance (SAR). Confers sensitivity to P.syringae and P.parasitica. The sequence is that of Protein SUPPRESSOR OF NIM1 1 (SON1) from Arabidopsis thaliana (Mouse-ear cress).